The primary structure comprises 295 residues: 4-diphosphocytidyl-2-C-methyl-D-erythritol kinase (295 aa).

K15 is a catalytic residue. Residue 102-112 (PIASGVGGGSS) participates in ATP binding. D144 is an active-site residue.

Belongs to the GHMP kinase family. IspE subfamily.

The enzyme catalyses 4-CDP-2-C-methyl-D-erythritol + ATP = 4-CDP-2-C-methyl-D-erythritol 2-phosphate + ADP + H(+). The protein operates within isoprenoid biosynthesis; isopentenyl diphosphate biosynthesis via DXP pathway; isopentenyl diphosphate from 1-deoxy-D-xylulose 5-phosphate: step 3/6. Functionally, catalyzes the phosphorylation of the position 2 hydroxy group of 4-diphosphocytidyl-2C-methyl-D-erythritol. In Mesorhizobium japonicum (strain LMG 29417 / CECT 9101 / MAFF 303099) (Mesorhizobium loti (strain MAFF 303099)), this protein is 4-diphosphocytidyl-2-C-methyl-D-erythritol kinase.